The chain runs to 130 residues: Small ribosomal subunit protein uS11 (130 aa).

This sequence belongs to the universal ribosomal protein uS11 family. In terms of assembly, part of the 30S ribosomal subunit.

Located on the platform of the 30S subunit. This chain is Small ribosomal subunit protein uS11, found in Thermoplasma acidophilum (strain ATCC 25905 / DSM 1728 / JCM 9062 / NBRC 15155 / AMRC-C165).